The sequence spans 301 residues: Protein FdhE homolog (301 aa).

The protein belongs to the FdhE family.

Its subcellular location is the cytoplasm. Functionally, necessary for formate dehydrogenase activity. This Shewanella baltica (strain OS223) protein is Protein FdhE homolog.